Reading from the N-terminus, the 592-residue chain is Aspartate--tRNA(Asp/Asn) ligase (592 aa).

L-aspartate is bound at residue E173. Positions 197–200 (QLFK) are aspartate. R219 is an L-aspartate binding site. ATP is bound by residues 219-221 (RDE) and Q228. L-aspartate is bound at residue H451. Residue E486 coordinates ATP. Position 493 (R493) interacts with L-aspartate. 538–541 (GLDR) lines the ATP pocket.

Belongs to the class-II aminoacyl-tRNA synthetase family. Type 1 subfamily. As to quaternary structure, homodimer.

The protein resides in the cytoplasm. It carries out the reaction tRNA(Asx) + L-aspartate + ATP = L-aspartyl-tRNA(Asx) + AMP + diphosphate. Aspartyl-tRNA synthetase with relaxed tRNA specificity since it is able to aspartylate not only its cognate tRNA(Asp) but also tRNA(Asn). Reaction proceeds in two steps: L-aspartate is first activated by ATP to form Asp-AMP and then transferred to the acceptor end of tRNA(Asp/Asn). The protein is Aspartate--tRNA(Asp/Asn) ligase of Alkalilimnicola ehrlichii (strain ATCC BAA-1101 / DSM 17681 / MLHE-1).